The following is a 304-amino-acid chain: Acetyl-coenzyme A carboxylase carboxyl transferase subunit beta (304 aa).

The 270-residue stretch at 25–294 (VWTKCDSCGQ…PSVVESKADT (270 aa)) folds into the CoA carboxyltransferase N-terminal domain. Zn(2+) contacts are provided by cysteine 29, cysteine 32, cysteine 48, and cysteine 51. Residues 29-51 (CDSCGQVLYRAELERNLEVCPKC) form a C4-type zinc finger.

Belongs to the AccD/PCCB family. As to quaternary structure, acetyl-CoA carboxylase is a heterohexamer composed of biotin carboxyl carrier protein (AccB), biotin carboxylase (AccC) and two subunits each of ACCase subunit alpha (AccA) and ACCase subunit beta (AccD). Zn(2+) serves as cofactor.

It localises to the cytoplasm. It catalyses the reaction N(6)-carboxybiotinyl-L-lysyl-[protein] + acetyl-CoA = N(6)-biotinyl-L-lysyl-[protein] + malonyl-CoA. It participates in lipid metabolism; malonyl-CoA biosynthesis; malonyl-CoA from acetyl-CoA: step 1/1. Its function is as follows. Component of the acetyl coenzyme A carboxylase (ACC) complex. Biotin carboxylase (BC) catalyzes the carboxylation of biotin on its carrier protein (BCCP) and then the CO(2) group is transferred by the transcarboxylase to acetyl-CoA to form malonyl-CoA. The sequence is that of Acetyl-coenzyme A carboxylase carboxyl transferase subunit beta from Yersinia pseudotuberculosis serotype O:1b (strain IP 31758).